The primary structure comprises 147 residues: Large ribosomal subunit protein uL13 (147 aa).

It belongs to the universal ribosomal protein uL13 family. In terms of assembly, part of the 50S ribosomal subunit.

Functionally, this protein is one of the early assembly proteins of the 50S ribosomal subunit, although it is not seen to bind rRNA by itself. It is important during the early stages of 50S assembly. This Corynebacterium diphtheriae (strain ATCC 700971 / NCTC 13129 / Biotype gravis) protein is Large ribosomal subunit protein uL13.